Here is a 401-residue protein sequence, read N- to C-terminus: Phosrestin-1 (401 aa).

Ser366 bears the Phosphoserine; by CaMK mark.

This sequence belongs to the arrestin family. Phosphorylated upon light exposure. As to expression, expressed in photoreceptor cells.

The protein resides in the cell projection. It is found in the rhabdomere. Regulates photoreceptor cell deactivation. Arr1 and Arr2 proteins are mediators of rhodopsin inactivation and are essential for the termination of the phototransduction cascade. Involved in regulating normal cycles of per nuclear accumulation in brain circadian neurons and thus is important for normal circadian behavior. In the dark, functions with Arr1 to promote the formation of cytosolic Bdbt foci, which are required for dco localization to photoreceptor nuclei where it phosphorylates and activates degradation of per. The chain is Phosrestin-1 (Arr2) from Drosophila melanogaster (Fruit fly).